A 983-amino-acid polypeptide reads, in one-letter code: Serine/threonine-protein kinase N2 (983 aa).

Residues K33–V109 form the REM-1 1 domain. At K77 the chain carries N6-acetyllysine. The disordered stretch occupies residues I107 to N135. Position 110 is a phosphoserine (S110). Phosphothreonine is present on residues T121 and T124. Over residues T121–N135 the composition is skewed to low complexity. 2 REM-1 domains span residues T121–L203 and A204–R284. S301, S305, S359, and S361 each carry phosphoserine. The segment at T351–L382 is disordered. In terms of domain architecture, C2 spans S352 to F472. The span at R364 to R380 shows a compositional bias: low complexity. A necessary to rescue apical junction formation region spans residues N381 to C462. Residues S534, S582, S619, and S630 each carry the phosphoserine modification. A disordered region spans residues L553–E588. Residues F656–F915 form the Protein kinase domain. Residues L662–V670 and K685 contribute to the ATP site. D781 (proton acceptor) is an active-site residue. T815 is subject to Phosphothreonine; by PDPK1. The tract at residues R916 to F976 is necessary for the catalytic activity. The AGC-kinase C-terminal domain occupies R916–C983. The residue at position 951 (S951) is a Phosphoserine. At T957 the chain carries Phosphothreonine. Residues D977–C983 form a negatively regulates the responsiveness of the catalytic activity by cardiolipin and is required for optimal activation by the GTP-bound RhoA region.

The protein belongs to the protein kinase superfamily. AGC Ser/Thr protein kinase family. PKC subfamily. As to quaternary structure, interacts (via the REM repeats) with RHOA (GTP-bound form preferentially) and interacts (via the REM repeats) with RAC1 (GTP-bound form preferentially); the interactions induce its autophosphorylation. Interacts with NCK1 (via SH3 domains). Interacts with RHOC. Interacts with NCK1 and NCK2. Interacts with CD44. Interacts (via C-terminal kinase domain) with PDPK1; the interaction stimulates PDPK1 kinase activity. Interacts with MAP3K2; the interaction activates PRK2 kinase activity in a MAP3K2-independent kinase activity. Interacts (via C-terminal domain) with AKT1; the interaction occurs with the C-terminal cleavage product of PRK2 in apoptotic cells. Interacts (via C-terminus) with PTPN13 (via PDZ 3 domain). Interacts with CDK10. In terms of processing, phosphorylated during mitosis. Autophosphorylated. Phosphorylated. Phosphorylated by CDK10. Post-translationally, activated by limited proteolysis with trypsin. Proteolytically cleaved by caspase-3 during the induction of apoptotic cell death. As to expression, ubiquitous. Highly expressed in liver and lung Expressed in astrocytes (at protein level). Ubiquitous.

The protein localises to the cytoplasm. Its subcellular location is the nucleus. It localises to the membrane. It is found in the cell projection. The protein resides in the lamellipodium. The protein localises to the cytoskeleton. Its subcellular location is the cleavage furrow. It localises to the midbody. It is found in the cell junction. The enzyme catalyses L-seryl-[protein] + ATP = O-phospho-L-seryl-[protein] + ADP + H(+). The catalysed reaction is L-threonyl-[protein] + ATP = O-phospho-L-threonyl-[protein] + ADP + H(+). Its activity is regulated as follows. Kinase activity is activated upon binding to GTP-bound Rho1/Rac1 GTPases. Activated by caspase-3 (CASP3) cleavage during apoptosis. Activated by lipids, particularly cardiolipin and to a lesser extent by other acidic phospholipids and unsaturated fatty acids. Two specific sites, Thr-815 (activation loop of the kinase domain) and Thr-957 (turn motif), need to be phosphorylated for its full activation. Functionally, PKC-related serine/threonine-protein kinase and Rho/Rac effector protein that participates in specific signal transduction responses in the cell. Plays a role in the regulation of cell cycle progression, actin cytoskeleton assembly, cell migration, cell adhesion, tumor cell invasion and transcription activation signaling processes. Phosphorylates CTTN in hyaluronan-induced astrocytes and hence decreases CTTN ability to associate with filamentous actin. Phosphorylates HDAC5, therefore lead to impair HDAC5 import. Direct RhoA target required for the regulation of the maturation of primordial junctions into apical junction formation in bronchial epithelial cells. Required for G2/M phases of the cell cycle progression and abscission during cytokinesis in a ECT2-dependent manner. Stimulates FYN kinase activity that is required for establishment of skin cell-cell adhesion during keratinocytes differentiation. Regulates epithelial bladder cells speed and direction of movement during cell migration and tumor cell invasion. Inhibits Akt pro-survival-induced kinase activity. Mediates Rho protein-induced transcriptional activation via the c-fos serum response factor (SRF). Involved in the negative regulation of ciliogenesis. The sequence is that of Serine/threonine-protein kinase N2 (Pkn2) from Mus musculus (Mouse).